The chain runs to 464 residues: ATP-dependent protease ATPase subunit HslU (464 aa).

Residues Ile-19, 61–66 (GVGKTE), Asp-277, Glu-342, and Arg-414 contribute to the ATP site.

It belongs to the ClpX chaperone family. HslU subfamily. In terms of assembly, a double ring-shaped homohexamer of HslV is capped on each side by a ring-shaped HslU homohexamer. The assembly of the HslU/HslV complex is dependent on binding of ATP.

Its subcellular location is the cytoplasm. ATPase subunit of a proteasome-like degradation complex; this subunit has chaperone activity. The binding of ATP and its subsequent hydrolysis by HslU are essential for unfolding of protein substrates subsequently hydrolyzed by HslV. HslU recognizes the N-terminal part of its protein substrates and unfolds these before they are guided to HslV for hydrolysis. The polypeptide is ATP-dependent protease ATPase subunit HslU (Lactobacillus johnsonii (strain CNCM I-12250 / La1 / NCC 533)).